Here is a 185-residue protein sequence, read N- to C-terminus: uncharacterized protein (185 aa).

Residues 1 to 24 form the signal peptide; the sequence is MPCNRAVFGAFVLALLISLQSVYF. Residues 50-70 traverse the membrane as a helical segment; the sequence is VAVNVIVEFSFDILFFLCGLL. Positions 96–113 are enriched in basic and acidic residues; the sequence is ELEHVSSRRRNDSRDDST. The tract at residues 96 to 185 is disordered; that stretch reads ELEHVSSRRR…LFTAGGIGLP (90 aa). The span at 114 to 126 shows a compositional bias: polar residues; sequence VRNVSKTSPLASQ. Residues 127 to 138 are compositionally biased toward basic and acidic residues; it reads RSRDHFDGDPRE. The segment covering 139–155 has biased composition (pro residues); sequence PAPPAYSPADFYPPPAS.

It localises to the host membrane. This is an uncharacterized protein from Colorado tick fever virus (strain USA/Florio N-7180) (CTFV).